Consider the following 759-residue polypeptide: Glucosylceramidase (759 aa).

The active-site Proton donor is Glu247. Glu497 (nucleophile) is an active-site residue. A disordered region spans residues 576–600 (AFENESQRDPQSPAYSESQRNTESY). Residues 584-599 (DPQSPAYSESQRNTES) show a composition bias toward polar residues.

The protein belongs to the glycosyl hydrolase 5 (cellulase A) family.

The protein localises to the membrane. It catalyses the reaction a beta-D-glucosyl-(1&lt;-&gt;1')-N-acylsphing-4-enine + H2O = an N-acylsphing-4-enine + D-glucose. In terms of biological role, specifically hydrolyzes the glucosidic linkage in glucosylceramide. May prevent accumulation of aberrent glucosylceramide containing immature ceramide. In Aspergillus fumigatus (Neosartorya fumigata), this protein is Glucosylceramidase.